A 446-amino-acid polypeptide reads, in one-letter code: Dihydroorotate dehydrogenase (quinone), mitochondrial (446 aa).

Residues 1-13 constitute a mitochondrion transit peptide; sequence MHSRPLPTLGRHA. The chain crosses the membrane as a helical span at residues 40 to 57; that stretch reads AILYTAGILGGAFAGYYL. FMN contacts are provided by residues 125–129 and serine 149; that span reads AGLDK. Lysine 129 contacts substrate. A substrate-binding site is contributed by 174-178; that stretch reads NRYGF. Residues asparagine 222 and asparagine 252 each coordinate FMN. Substrate contacts are provided by residues asparagine 252 and 252–257; that span reads NVSSPN. The active-site Nucleophile is serine 255. FMN-binding residues include lysine 303 and serine 331. 332 to 333 is a substrate binding site; that stretch reads NT. FMN-binding positions include glycine 357, glycine 387, and 408 to 409; that span reads YT.

This sequence belongs to the dihydroorotate dehydrogenase family. Type 2 subfamily. The cofactor is FMN.

It is found in the mitochondrion inner membrane. It carries out the reaction (S)-dihydroorotate + a quinone = orotate + a quinol. The protein operates within pyrimidine metabolism; UMP biosynthesis via de novo pathway; orotate from (S)-dihydroorotate (quinone route): step 1/1. With respect to regulation, the activity is dependent of the presence of oxygen. Catalyzes the conversion of dihydroorotate to orotate with quinone as electron acceptor. The sequence is that of Dihydroorotate dehydrogenase (quinone), mitochondrial (URA9) from Lachancea kluyveri (strain ATCC 58438 / CBS 3082 / BCRC 21498 / NBRC 1685 / JCM 7257 / NCYC 543 / NRRL Y-12651) (Yeast).